Consider the following 366-residue polypeptide: Ribosomal RNA large subunit methyltransferase M (366 aa).

S-adenosyl-L-methionine-binding positions include S188, 221-224, D240, D260, and D277; that span reads CPGG. K306 serves as the catalytic Proton acceptor.

This sequence belongs to the class I-like SAM-binding methyltransferase superfamily. RNA methyltransferase RlmE family. RlmM subfamily. As to quaternary structure, monomer.

It localises to the cytoplasm. The enzyme catalyses cytidine(2498) in 23S rRNA + S-adenosyl-L-methionine = 2'-O-methylcytidine(2498) in 23S rRNA + S-adenosyl-L-homocysteine + H(+). Its function is as follows. Catalyzes the 2'-O-methylation at nucleotide C2498 in 23S rRNA. This chain is Ribosomal RNA large subunit methyltransferase M, found in Salmonella heidelberg (strain SL476).